The chain runs to 132 residues: AP-2 complex subunit sigma (132 aa).

This sequence belongs to the adaptor complexes small subunit family. As to quaternary structure, adaptor protein complex 2 (AP-2) is a heterotetramer composed of two large adaptins (alpha-type and beta-type subunits), a medium adaptin (mu-type subunit AP50) and a small adaptin (sigma-type subunit AP17). In terms of tissue distribution, widely expressed in the embryo, endosperm, leaf and root.

The protein resides in the cell membrane. The protein localises to the membrane. Its subcellular location is the coated pit. Its function is as follows. Component of the adaptor complexes which link clathrin to receptors in coated vesicles. Clathrin-associated protein complexes are believed to interact with the cytoplasmic tails of membrane proteins, leading to their selection and concentration. AP2S1/AP17 is a subunit of the plasma membrane adaptor. The complex binds polyphosphoinositides. The chain is AP-2 complex subunit sigma (AP-17) from Zea mays (Maize).